A 317-amino-acid chain; its full sequence is Beta-ketoacyl-[acyl-carrier-protein] synthase III (317 aa).

Active-site residues include Cys-112 and His-244. An ACP-binding region spans residues 245–249 (QANLR). Residue Asn-274 is part of the active site.

The protein belongs to the thiolase-like superfamily. FabH family. Homodimer.

Its subcellular location is the cytoplasm. The enzyme catalyses malonyl-[ACP] + acetyl-CoA + H(+) = 3-oxobutanoyl-[ACP] + CO2 + CoA. It participates in lipid metabolism; fatty acid biosynthesis. Functionally, catalyzes the condensation reaction of fatty acid synthesis by the addition to an acyl acceptor of two carbons from malonyl-ACP. Catalyzes the first condensation reaction which initiates fatty acid synthesis and may therefore play a role in governing the total rate of fatty acid production. Possesses both acetoacetyl-ACP synthase and acetyl transacylase activities. Its substrate specificity determines the biosynthesis of branched-chain and/or straight-chain of fatty acids. This Aliivibrio fischeri (strain ATCC 700601 / ES114) (Vibrio fischeri) protein is Beta-ketoacyl-[acyl-carrier-protein] synthase III.